The chain runs to 126 residues: Large ribosomal subunit protein uL22 (126 aa).

Belongs to the universal ribosomal protein uL22 family. As to quaternary structure, part of the 50S ribosomal subunit.

In terms of biological role, this protein binds specifically to 23S rRNA; its binding is stimulated by other ribosomal proteins, e.g. L4, L17, and L20. It is important during the early stages of 50S assembly. It makes multiple contacts with different domains of the 23S rRNA in the assembled 50S subunit and ribosome. Its function is as follows. The globular domain of the protein is located near the polypeptide exit tunnel on the outside of the subunit, while an extended beta-hairpin is found that lines the wall of the exit tunnel in the center of the 70S ribosome. This is Large ribosomal subunit protein uL22 from Dinoroseobacter shibae (strain DSM 16493 / NCIMB 14021 / DFL 12).